Reading from the N-terminus, the 1032-residue chain is Calmodulin-binding transcription activator 3 (1032 aa).

The CG-1 DNA-binding region spans valine 15 to serine 141. The disordered stretch occupies residues arginine 146–histidine 197. The segment covering cysteine 174 to glycine 195 has biased composition (polar residues). Residue serine 272 is modified to Phosphoserine. 3 ANK repeats span residues glycine 661–phenylalanine 690, asparagine 694–threonine 723, and serine 733–valine 762. 2 IQ domains span residues valine 852 to lysine 881 and threonine 875 to valine 904. A calmodulin-binding region spans residues tryptophan 900 to phenylalanine 922. Residues lysine 945 to glutamate 987 are a coiled coil. The residue at position 964 (serine 964) is a Phosphoserine.

This sequence belongs to the CAMTA family. In terms of assembly, interacts with SR1IP1. Interacts with DSC1. Ubiquinated during pathogen infection. Ubiquitination leads to its subsequent proteasome-dependent degradation, thus allowing the establishment of plant defense response. In terms of tissue distribution, expressed in roots, stems, leaves, carpels, and siliques, but not in stigmas or other parts of the flower.

The protein localises to the nucleus. Its function is as follows. Transcription activator that binds to the DNA consensus sequence 5'-[ACG]CGCG[GTC]-3'. Binds calmodulin in a calcium-dependent manner in vitro. Regulates transcriptional activity in response to calcium signals. Involved in freezing tolerance in association with CAMTA1 and CAMTA2. Required for the cold-induced expression of DREB1B/CBF1, DREB1C/CBF2, ZAT12 and GOLS3. Involved in response to cold. Contributes together with CAMTA5 to the positive regulation of the cold-induced expression of DREB1A/CBF3, DREB1B/CBF1 and DREB1C/CBF2. Involved together with CAMTA2 and CAMTA4 in the positive regulation of a general stress response (GSR). Involved in the regulation of GSR amplitude downstream of MEKK1. Involved in the regulation of a set of genes involved in defense responses against pathogens. Involved in the regulation of both basal resistance and systemic acquired resistance (SAR). Acts as negative regulator of plant immunity. Binds to the promoter of the defense-related gene EDS1 and represses its expression. Binds to the promoter of the defense-related gene NDR1 and represses its expression. Involved in defense against insects. Required for tolerance to the generalist herbivore Trichoplusia ni, and contributes to the positive regulation of genes associated with glucosinolate metabolism. Required for tolerance to Bradysia impatiens larvae. Mediates herbivore-induced wound response. Required for wound-induced jasmonate accumulation. Involved in the regulation of ethylene-induced senescence by binding to the promoter of the senescence-inducer gene EIN3 and repressing its expression. This Arabidopsis thaliana (Mouse-ear cress) protein is Calmodulin-binding transcription activator 3.